A 322-amino-acid polypeptide reads, in one-letter code: PI-PLC X domain-containing protein 3 (322 aa).

The region spanning Thr-22 to Asn-197 is the PI-PLC X-box domain. Catalysis depends on residues His-37 and His-114.

The polypeptide is PI-PLC X domain-containing protein 3 (plcxd3) (Danio rerio (Zebrafish)).